Consider the following 183-residue polypeptide: Troponin I, fast skeletal muscle (183 aa).

Ser-2 carries the N-acetylserine modification. The involved in binding TNC stretch occupies residues 2 to 48 (SDEEKKRRAATARRQHLKSAMLQLAVTEIEKEAAAKEVEKQNYLAEH). The involved in binding TNC and actin stretch occupies residues 97 to 117 (SQKLFDLRGKFKRPPLRRVRM).

It belongs to the troponin I family. In terms of assembly, binds to actin and tropomyosin. The N-terminus is blocked.

Functionally, troponin I is the inhibitory subunit of troponin, the thin filament regulatory complex which confers calcium-sensitivity to striated muscle actomyosin ATPase activity. In Gallus gallus (Chicken), this protein is Troponin I, fast skeletal muscle (TNNI2).